Consider the following 218-residue polypeptide: 7-cyano-7-deazaguanine synthase (218 aa).

ATP is bound at residue 11 to 21 (LSGGMDSATLL). The Zn(2+) site is built by cysteine 193, cysteine 201, cysteine 204, and cysteine 207.

It belongs to the QueC family. It depends on Zn(2+) as a cofactor.

It catalyses the reaction 7-carboxy-7-deazaguanine + NH4(+) + ATP = 7-cyano-7-deazaguanine + ADP + phosphate + H2O + H(+). Its pathway is purine metabolism; 7-cyano-7-deazaguanine biosynthesis. Functionally, catalyzes the ATP-dependent conversion of 7-carboxy-7-deazaguanine (CDG) to 7-cyano-7-deazaguanine (preQ(0)). The protein is 7-cyano-7-deazaguanine synthase of Aquifex aeolicus (strain VF5).